The chain runs to 163 residues: Nucleotide-binding protein MAV_4575 (163 aa).

Belongs to the YajQ family.

Nucleotide-binding protein. The protein is Nucleotide-binding protein MAV_4575 of Mycobacterium avium (strain 104).